The sequence spans 82 residues: UPF0512 protein P (82 aa).

This sequence belongs to the UPF0512 family.

In Dictyostelium discoideum (Social amoeba), this protein is UPF0512 protein P.